The primary structure comprises 247 residues: Large ribosomal subunit protein uL30z (247 aa).

It belongs to the universal ribosomal protein uL30 family.

The chain is Large ribosomal subunit protein uL30z (RPL7A) from Arabidopsis thaliana (Mouse-ear cress).